We begin with the raw amino-acid sequence, 523 residues long: 2-isopropylmalate synthase (523 aa).

In terms of domain architecture, Pyruvate carboxyltransferase spans 5-267 (VIIFDTTLRD…HTAINHQEIW (263 aa)). Mn(2+) is bound by residues Asp-14, His-202, His-204, and Asn-238. The tract at residues 392–523 (RLDYFSVQSS…QHNENNKETV (132 aa)) is regulatory domain.

The protein belongs to the alpha-IPM synthase/homocitrate synthase family. LeuA type 1 subfamily. Homodimer. It depends on Mn(2+) as a cofactor.

It localises to the cytoplasm. It carries out the reaction 3-methyl-2-oxobutanoate + acetyl-CoA + H2O = (2S)-2-isopropylmalate + CoA + H(+). The protein operates within amino-acid biosynthesis; L-leucine biosynthesis; L-leucine from 3-methyl-2-oxobutanoate: step 1/4. In terms of biological role, catalyzes the condensation of the acetyl group of acetyl-CoA with 3-methyl-2-oxobutanoate (2-ketoisovalerate) to form 3-carboxy-3-hydroxy-4-methylpentanoate (2-isopropylmalate). The polypeptide is 2-isopropylmalate synthase (Shigella dysenteriae serotype 1 (strain Sd197)).